A 237-amino-acid chain; its full sequence is U2 small nuclear ribonucleoprotein A' (237 aa).

3 LRR repeats span residues 53 to 74 (RTNIVDFTNNELEELPPLGHND), 75 to 95 (TVHTLLLSRNRLGRLDASRLP), and 97 to 118 (YLVNLNLAMNRFEKFEQLQGLR). An LRRCT domain is found at 132–170 (NVICHKEQYRETVIALCPQLAVLDGERVRQAERQAAPQN). The disordered stretch occupies residues 161-182 (QAERQAAPQNEKTDTPTEGPQP).

The protein belongs to the U2 small nuclear ribonucleoprotein A family. Associated with the spliceosome.

It localises to the nucleus. Involved in pre-mRNA splicing. This chain is U2 small nuclear ribonucleoprotein A' (LEA1), found in Eremothecium gossypii (strain ATCC 10895 / CBS 109.51 / FGSC 9923 / NRRL Y-1056) (Yeast).